Consider the following 463-residue polypeptide: Siroheme synthase (463 aa).

The precorrin-2 dehydrogenase /sirohydrochlorin ferrochelatase stretch occupies residues 1–203 (MDYLPLFHKL…GQGAEAERLL (203 aa)). Residues 22–23 (EI) and 43–44 (PE) contribute to the NAD(+) site. Serine 128 carries the post-translational modification Phosphoserine. A uroporphyrinogen-III C-methyltransferase region spans residues 216 to 463 (GEVYLVGAGP…LAWFEGAQNS (248 aa)). Proline 225 contacts S-adenosyl-L-methionine. The Proton acceptor role is filled by aspartate 248. The Proton donor role is filled by lysine 270. S-adenosyl-L-methionine-binding positions include 301-303 (GGD), isoleucine 306, 331-332 (TA), methionine 383, and glycine 412.

This sequence in the N-terminal section; belongs to the precorrin-2 dehydrogenase / sirohydrochlorin ferrochelatase family. The protein in the C-terminal section; belongs to the precorrin methyltransferase family.

The catalysed reaction is uroporphyrinogen III + 2 S-adenosyl-L-methionine = precorrin-2 + 2 S-adenosyl-L-homocysteine + H(+). It carries out the reaction precorrin-2 + NAD(+) = sirohydrochlorin + NADH + 2 H(+). It catalyses the reaction siroheme + 2 H(+) = sirohydrochlorin + Fe(2+). The protein operates within cofactor biosynthesis; adenosylcobalamin biosynthesis; precorrin-2 from uroporphyrinogen III: step 1/1. It functions in the pathway cofactor biosynthesis; adenosylcobalamin biosynthesis; sirohydrochlorin from precorrin-2: step 1/1. Its pathway is porphyrin-containing compound metabolism; siroheme biosynthesis; precorrin-2 from uroporphyrinogen III: step 1/1. It participates in porphyrin-containing compound metabolism; siroheme biosynthesis; siroheme from sirohydrochlorin: step 1/1. The protein operates within porphyrin-containing compound metabolism; siroheme biosynthesis; sirohydrochlorin from precorrin-2: step 1/1. Its function is as follows. Multifunctional enzyme that catalyzes the SAM-dependent methylations of uroporphyrinogen III at position C-2 and C-7 to form precorrin-2 via precorrin-1. Then it catalyzes the NAD-dependent ring dehydrogenation of precorrin-2 to yield sirohydrochlorin. Finally, it catalyzes the ferrochelation of sirohydrochlorin to yield siroheme. In Pseudomonas entomophila (strain L48), this protein is Siroheme synthase.